A 1109-amino-acid polypeptide reads, in one-letter code: Hybrid signal transduction histidine kinase F (1109 aa).

The PAC domain occupies 237 to 289; that stretch reads LSTETTITKKNGEKYPAEVFVKEISDIHSNSIGIMIIVRDITDQIRLKEMNIE. Residues 324-547 form the Histidine kinase domain; it reads TISHEIRTPL…LFSVTLNFEQ (224 aa). H327 carries the phosphohistidine; by autocatalysis modification. Residues 719–760 adopt a coiled-coil conformation; sequence SNLIQTISQIDNQQQQQQQQLQQQEQEQQHQQQQLQQEQQFV. Low complexity predominate over residues 739–758; it reads LQQQEQEQQHQQQQLQQEQQ. Positions 739 to 819 are disordered; sequence LQQQEQEQQH…TSSDSGESDE (81 aa). Residues 767 to 782 show a composition bias toward basic and acidic residues; the sequence is DSSEKKTTPKKDRGKY. Residues 928-1048 form the Response regulatory domain; the sequence is RILLVDDNAV…PLGELVKKYL (121 aa). Position 977 is a 4-aspartylphosphate (D977). The segment covering 1052–1099 has biased composition (low complexity); sequence NNNNNNNNNNNNNNNNNSNNNNSNSNSNPNSNSNSNSNSNSNPNQNPN. The tract at residues 1052–1109 is disordered; sequence NNNNNNNNNNNNNNNNNSNNNNSNSNSNPNSNSNSNSNSNSNPNQNPNYCNNLPTDFI. Positions 1100 to 1109 are enriched in polar residues; that stretch reads YCNNLPTDFI.

It catalyses the reaction ATP + protein L-histidine = ADP + protein N-phospho-L-histidine.. Its function is as follows. Acts as a receptor histidine kinase for a signal transduction pathway. This protein undergoes an ATP-dependent autophosphorylation at a conserved histidine residue in the kinase core, and a phosphoryl group is then transferred to a conserved aspartate residue in the receiver domain. The protein is Hybrid signal transduction histidine kinase F (dhkF) of Dictyostelium discoideum (Social amoeba).